The chain runs to 441 residues: RUN domain-containing protein 3A (441 aa).

The tract at residues 1-293 is interaction with RAP2A; the sequence is MEASFVQTTM…LQLQLEEAAA (293 aa). One can recognise an RUN domain in the interval 52-184; the sequence is DDSSEEFVNF…IDFSFCLKGE (133 aa). Thr-210 is subject to Phosphothreonine. The interval 211–234 is disordered; the sequence is DEEERHSAESSTSEDNSPEHPYLP. Ser-227 carries the phosphoserine modification. Residues 262–317 adopt a coiled-coil conformation; the sequence is YLEELVRLRESQLKDLEAENRRLQLQLEEAAAQNQREKRELEGVILELQEQLTGLI. Over residues 367 to 379 the composition is skewed to polar residues; that stretch reads PLSAEASLSSDSQ. Positions 367-399 are disordered; the sequence is PLSAEASLSSDSQRLGEGKRDEEPWGPIGKDPT. A compositionally biased stretch (basic and acidic residues) spans 380-389; sequence RLGEGKRDEE. 2 positions are modified to phosphoserine: Ser-411 and Ser-414.

It belongs to the RUNDC3 family. As to quaternary structure, interacts with the GTP-bound form of RAP2A.

May act as an effector of RAP2A in neuronal cells. The protein is RUN domain-containing protein 3A (RUNDC3A) of Bos taurus (Bovine).